Here is a 223-residue protein sequence, read N- to C-terminus: Translation initiation factor 6 (223 aa).

This sequence belongs to the eIF-6 family.

In terms of biological role, binds to the 50S ribosomal subunit and prevents its association with the 30S ribosomal subunit to form the 70S initiation complex. The protein is Translation initiation factor 6 of Methanobrevibacter smithii (strain ATCC 35061 / DSM 861 / OCM 144 / PS).